We begin with the raw amino-acid sequence, 185 residues long: Elongation factor P (185 aa).

This sequence belongs to the elongation factor P family.

Its subcellular location is the cytoplasm. It functions in the pathway protein biosynthesis; polypeptide chain elongation. Involved in peptide bond synthesis. Stimulates efficient translation and peptide-bond synthesis on native or reconstituted 70S ribosomes in vitro. Probably functions indirectly by altering the affinity of the ribosome for aminoacyl-tRNA, thus increasing their reactivity as acceptors for peptidyl transferase. The polypeptide is Elongation factor P (Nitratidesulfovibrio vulgaris (strain DP4) (Desulfovibrio vulgaris)).